The primary structure comprises 499 residues: MTTKQPTRFEAVIGIETHVQLNSRTKAFCRCAYEYGAEPNTRVCPTCMGHPGTLPVLNSAVVKKGIAIGTALGAKIRRTSKFDRKQYFYPDLPKGYQISQFDEPLCYDGSIDVVLPVEDGGEVKRVGITRAHLEEDAGKLTHAKGEDGKKYSYADFNRAGVALLEIVTEPDLRTGREVAAYGSELRRIVRFLDACDGDMSRGSMRNDVNVSIRPVGRERFGTKVEVKNMNSFNAMARAIDYEIARQEELIRSGRGDEIVQETRTWDEAAQKTVAMRKKEGLADYRYFPEPDIPKLRLSEEFISNVVASMPELPSMVRARYAALGLPPADVQVLVEDKELVTYFDAALSSSAKPSAKQVANWLTGDIMAHLKNSKMENVSQLPLSPEALGEFCAMIDAGEISGKIGKDLLPELLEKGGSAKKLVADRGLSQVSDPREIEALVDGVLEANAGQLEQYRAGKTKLKGFFVGACLKASGGRANPSLVDRILQAKLDGVPIDVA.

The protein belongs to the GatB/GatE family. GatB subfamily. In terms of assembly, subunit of the heterotrimeric GatCAB amidotransferase (AdT) complex, composed of A, B and C subunits.

It localises to the mitochondrion. Its subcellular location is the plastid. The protein localises to the chloroplast. The catalysed reaction is L-glutamyl-tRNA(Gln) + L-glutamine + ATP + H2O = L-glutaminyl-tRNA(Gln) + L-glutamate + ADP + phosphate + H(+). Its function is as follows. Allows the formation of correctly charged Gln-tRNA(Gln) through the transamidation of misacylated Glu-tRNA(Gln) in chloroplasts and mitochondria. The reaction takes place in the presence of glutamine and ATP through an activated gamma-phospho-Glu-tRNA(Gln). The chain is Glutamyl-tRNA(Gln) amidotransferase subunit B, chloroplastic/mitochondrial from Ostreococcus lucimarinus (strain CCE9901).